A 79-amino-acid polypeptide reads, in one-letter code: Putative membrane protein insertion efficiency factor (79 aa).

It belongs to the UPF0161 family.

The protein localises to the cell inner membrane. Functionally, could be involved in insertion of integral membrane proteins into the membrane. This chain is Putative membrane protein insertion efficiency factor, found in Bacteroides thetaiotaomicron (strain ATCC 29148 / DSM 2079 / JCM 5827 / CCUG 10774 / NCTC 10582 / VPI-5482 / E50).